The sequence spans 332 residues: DNA-directed RNA polymerase subunit alpha (332 aa).

Residues 1–234 (MIEYVIPKKL…NHLQIITDSL (234 aa)) form an alpha N-terminal domain (alpha-NTD) region. The segment at 264–332 (AVYSKKIDEL…KFGLSLKKGG (69 aa)) is alpha C-terminal domain (alpha-CTD).

Belongs to the RNA polymerase alpha chain family. In terms of assembly, homodimer. The RNAP catalytic core consists of 2 alpha, 1 beta, 1 beta' and 1 omega subunit. When a sigma factor is associated with the core the holoenzyme is formed, which can initiate transcription.

It carries out the reaction RNA(n) + a ribonucleoside 5'-triphosphate = RNA(n+1) + diphosphate. In terms of biological role, DNA-dependent RNA polymerase catalyzes the transcription of DNA into RNA using the four ribonucleoside triphosphates as substrates. This Pseudothermotoga lettingae (strain ATCC BAA-301 / DSM 14385 / NBRC 107922 / TMO) (Thermotoga lettingae) protein is DNA-directed RNA polymerase subunit alpha.